Consider the following 158-residue polypeptide: Cyclic pyranopterin monophosphate synthase (158 aa).

Substrate-binding positions include 74–76 and 112–113; these read MCH and ME. The active site involves Asp-127.

This sequence belongs to the MoaC family. As to quaternary structure, homohexamer; trimer of dimers.

It catalyses the reaction (8S)-3',8-cyclo-7,8-dihydroguanosine 5'-triphosphate = cyclic pyranopterin phosphate + diphosphate. The protein operates within cofactor biosynthesis; molybdopterin biosynthesis. In terms of biological role, catalyzes the conversion of (8S)-3',8-cyclo-7,8-dihydroguanosine 5'-triphosphate to cyclic pyranopterin monophosphate (cPMP). The sequence is that of Cyclic pyranopterin monophosphate synthase from Helicobacter pylori (strain J99 / ATCC 700824) (Campylobacter pylori J99).